The sequence spans 865 residues: MFSVPGVSGILNRGGGHKIKGTVVLMRKNVLDFNSVADLTKGNVGGLIGTGLNVVGSTLDNLTAFLGRSVALQLISATKPLANGKGKVGKDTFLEGIIVSLPTLGAGESAFNIQFEWDESMGIPGAFYIKNYMQVEFYLKSLTLEDVPNQGTIRFVCNSWVYNTKLYKSVRIFFANHTYVPSETPAALVGYREEELKNLRGDGKGERKEHDRIYDYDVYNDLGNPDHGENFARPILGGSSTHPYPRRGRTGRYPTRKDQNSEKPGEVYVPRDENFGHLKSSDFLAYGIKSLSQYVLPAFESVFDLNFTPNEFDSFQDVRDLHEGGIKLPTEVISTIMPLPVVKELFRTDGEQVLKFPPPHVIQVSKSAWMTDEEFAREMVAGVNPCVIRGLQEFPPKSNLDPTIYGEQTSKITADALDLDGYTVDEALASRRLFMLDYHDVFMPYIRRINQTYAKAYATRTILFLRENGTLKPVAIELSLPHPAGDLSGAVSQVILPAKEGVESTIWLLAKAYVVVNDSCYHQLMSHWLNTHAVIEPFIIATNRHLSALHPIYKLLTPHYRDTMNINALARQSLINADGIIEKSFLPSKHSVEMSSAVYKNWVFTDQALPADLIKRGVAIKDPSAPHGLRLLIEDYPYAVDGLEIWAAIKTWVQEYVSLYYARDDDVKPDSELQQWWKEAVEKGHGDLKDKPWWPKLQTIEELVEICTIIIWTASALHAAVNFGQYPYGGFILNRPTSSRRLLPEKGTPEYEEMVKSHQKAYLRTITSKFQTLVDLSVIEILSRHASDEVYLGQRDNPHWTSDSKALQAFQKFGNKLKEIEEKLARKNNDQSLSNRLGPVQLPYTLLHPNSEGLTCRGIPNSISI.

Residues 50-175 form the PLAT domain; that stretch reads TGLNVVGSTL…LYKSVRIFFA (126 aa). Residues 178–865 enclose the Lipoxygenase domain; sequence TYVPSETPAA…CRGIPNSISI (688 aa). Residues 234 to 265 form a disordered region; sequence PILGGSSTHPYPRRGRTGRYPTRKDQNSEKPG. The span at 255 to 265 shows a compositional bias: basic and acidic residues; that stretch reads TRKDQNSEKPG. Residues His-527, His-532, His-718, Asn-722, and Ile-865 each contribute to the Fe cation site.

The protein belongs to the lipoxygenase family. In terms of assembly, monomer. Fe cation serves as cofactor.

It is found in the cytoplasm. The catalysed reaction is (9Z,12Z)-octadecadienoate + O2 = (9S)-hydroperoxy-(10E,12Z)-octadecadienoate. It participates in lipid metabolism; oxylipin biosynthesis. Its function is as follows. Plant lipoxygenase may be involved in a number of diverse aspects of plant physiology including growth and development, pest resistance, and senescence or responses to wounding. It catalyzes the hydroperoxidation of lipids containing a cis,cis-1,4-pentadiene structure. This chain is Seed linoleate 9S-lipoxygenase-2 (LOX1.2), found in Glycine max (Soybean).